We begin with the raw amino-acid sequence, 421 residues long: UDP-N-acetylglucosamine 1-carboxyvinyltransferase 1 (421 aa).

Position 22 to 23 (22 to 23) interacts with phosphoenolpyruvate; the sequence is KN. UDP-N-acetyl-alpha-D-glucosamine is bound at residue arginine 95. Cysteine 119 acts as the Proton donor in catalysis. Cysteine 119 bears the 2-(S-cysteinyl)pyruvic acid O-phosphothioketal mark. Residues 124 to 128, aspartate 308, and valine 330 each bind UDP-N-acetyl-alpha-D-glucosamine; that span reads RPIEQ.

It belongs to the EPSP synthase family. MurA subfamily.

It localises to the cytoplasm. It catalyses the reaction phosphoenolpyruvate + UDP-N-acetyl-alpha-D-glucosamine = UDP-N-acetyl-3-O-(1-carboxyvinyl)-alpha-D-glucosamine + phosphate. It participates in cell wall biogenesis; peptidoglycan biosynthesis. In terms of biological role, cell wall formation. Adds enolpyruvyl to UDP-N-acetylglucosamine. In Staphylococcus aureus (strain bovine RF122 / ET3-1), this protein is UDP-N-acetylglucosamine 1-carboxyvinyltransferase 1.